The chain runs to 662 residues: Interferon-induced GTP-binding protein Mx1 (662 aa).

The residue at position 1 (Met-1) is an N-acetylmethionine. The 274-residue stretch at 67–340 folds into the Dynamin-type G domain; the sequence is DLALPAIAVI…LITHICKSLP (274 aa). Residues 77–84 are G1 motif; sequence GDQSSGKS. Residue 77–84 participates in GTP binding; it reads GDQSSGKS. Positions 102–104 are G2 motif; that stretch reads VTR. Residues 178–181 form a G3 motif region; sequence DLPG. Residues 178-182 and 247-250 each bind GTP; these read DLPGI and TKPD. A G4 motif region spans residues 247-250; sequence TKPD. A G5 motif region spans residues 279–282; that stretch reads KCRG. The segment at 341 to 366 is bundle signaling element (BSE); sequence LLENQIRESHQRITEELQKYGVDVPE. The middle domain stretch occupies residues 366 to 533; the sequence is EDENEKMFFL…HFQMEQIVYC (168 aa). The tract at residues 367 to 632 is stalk; that stretch reads DENEKMFFLI…KDTYSWLLKE (266 aa). Residues 554–557 are critical for lipid-binding; that stretch reads KKKK. The 89-residue stretch at 574-662 folds into the GED domain; the sequence is MEEIFQHLMA…ARRRLAQFPG (89 aa).

It belongs to the TRAFAC class dynamin-like GTPase superfamily. Dynamin/Fzo/YdjA family. In terms of assembly, homooligomer. Oligomerizes into multimeric filamentous or ring-like structures by virtue of its stalk domain. Oligomerization is critical for GTPase activity, protein stability, and recognition of viral target structures. Interacts with TRPC1, TRPC3, TRPC4, TRPC5, TRPC6 and TRPC7. Interacts with HSPA5. Interacts with TUBB/TUBB5. Interacts with DDX39A and DDX39B. In terms of processing, ISGylated.

Its subcellular location is the cytoplasm. The protein resides in the endoplasmic reticulum membrane. The protein localises to the perinuclear region. Functionally, interferon-induced dynamin-like GTPase with antiviral activity. This Pongo abelii (Sumatran orangutan) protein is Interferon-induced GTP-binding protein Mx1 (MX1).